The chain runs to 388 residues: S-adenosylmethionine synthase (388 aa).

His-17 serves as a coordination point for ATP. Mg(2+) is bound at residue Asp-19. K(+) is bound at residue Glu-45. L-methionine contacts are provided by Glu-58 and Gln-102. Positions 102–112 are flexible loop; it reads QSADIAQGVDA. Residues 167-169, 232-233, Asp-241, 247-248, Ala-264, and Lys-268 contribute to the ATP site; these read DSK, RF, and RK. Asp-241 is a binding site for L-methionine. Lys-272 contributes to the L-methionine binding site.

Belongs to the AdoMet synthase family. As to quaternary structure, homotetramer; dimer of dimers. Mg(2+) serves as cofactor. The cofactor is K(+).

The protein localises to the cytoplasm. It catalyses the reaction L-methionine + ATP + H2O = S-adenosyl-L-methionine + phosphate + diphosphate. Its pathway is amino-acid biosynthesis; S-adenosyl-L-methionine biosynthesis; S-adenosyl-L-methionine from L-methionine: step 1/1. Catalyzes the formation of S-adenosylmethionine (AdoMet) from methionine and ATP. The overall synthetic reaction is composed of two sequential steps, AdoMet formation and the subsequent tripolyphosphate hydrolysis which occurs prior to release of AdoMet from the enzyme. This Paramagnetospirillum magneticum (strain ATCC 700264 / AMB-1) (Magnetospirillum magneticum) protein is S-adenosylmethionine synthase.